We begin with the raw amino-acid sequence, 271 residues long: Putative hydro-lyase blr2921 (271 aa).

Belongs to the D-glutamate cyclase family.

This is Putative hydro-lyase blr2921 from Bradyrhizobium diazoefficiens (strain JCM 10833 / BCRC 13528 / IAM 13628 / NBRC 14792 / USDA 110).